An 893-amino-acid polypeptide reads, in one-letter code: Desmocollin-1 (893 aa).

Residues 1–29 form the signal peptide; it reads MAVASAAPGSIFWKQLLFSLLVLILFCDA. Positions 30 to 132 are excised as a propeptide; the sequence is CQKISLQVPS…KDAVLRRTKR (103 aa). 5 Cadherin domains span residues 133–240, 241–352, 353–470, 471–574, and 575–682; these read RWAP…APYF, ENKL…APYF, TETS…GPEC, QPPV…DHPP, and QIKQ…LSRE. At 133-692 the chain is on the extracellular side; the sequence is RWAPIPCSLM…AALANVFLGK (560 aa). Asn-163 is a glycosylation site (N-linked (GlcNAc...) asparagine). Residue Thr-383 is modified to Phosphothreonine. N-linked (GlcNAc...) asparagine glycans are attached at residues Asn-398 and Asn-545. Residues 693–715 form a helical membrane-spanning segment; it reads WAILAMVLGSVLLLCILFTCFCV. Residues 716-893 lie on the Cytoplasmic side of the membrane; the sequence is TVKKTVKKCF…RTLAKTCVKK (178 aa).

Binds to JUP/plakoglobin. In terms of processing, isoform 1A is phosphorylated on a serine but isoform 1B is not. Epidermis and weakly in tongue papillae.

Its subcellular location is the cell membrane. It localises to the cell junction. The protein localises to the desmosome. Functionally, a component of desmosome cell-cell junctions which are required for positive regulation of cellular adhesion. Required for desmosome adhesion strength between the granular layers of the epidermis, as a result moderates epidermal proliferation and differentiation. Is therefore required to maintain postnatal epidermal barrier function and normal hair follicle morphology into adulthood. The polypeptide is Desmocollin-1 (DSC1) (Bos taurus (Bovine)).